A 601-amino-acid polypeptide reads, in one-letter code: Glutamine--fructose-6-phosphate aminotransferase [isomerizing] (601 aa).

Cys2 serves as the catalytic Nucleophile; for GATase activity. A Glutamine amidotransferase type-2 domain is found at 2–218; that stretch reads CGIVGYIGYD…DHEIVIVKKD (217 aa). 2 consecutive SIS domains span residues 284–423 and 453–591; these read IIND…EHGR and IATD…VDKP. Lys596 serves as the catalytic For Fru-6P isomerization activity.

In terms of assembly, homodimer.

It localises to the cytoplasm. It catalyses the reaction D-fructose 6-phosphate + L-glutamine = D-glucosamine 6-phosphate + L-glutamate. Its function is as follows. Catalyzes the first step in hexosamine metabolism, converting fructose-6P into glucosamine-6P using glutamine as a nitrogen source. The chain is Glutamine--fructose-6-phosphate aminotransferase [isomerizing] from Staphylococcus aureus (strain COL).